Here is a 236-residue protein sequence, read N- to C-terminus: DNA repair and recombination protein RadB (236 aa).

This sequence belongs to the eukaryotic RecA-like protein family. RadB subfamily.

Its function is as follows. Involved in DNA repair and in homologous recombination. May regulate the cleavage reactions of the branch-structured DNA. Has a very weak ATPase activity that is not stimulated by DNA. Binds DNA but does not promote DNA strands exchange. The chain is DNA repair and recombination protein RadB from Halobacterium salinarum (strain ATCC 29341 / DSM 671 / R1).